Consider the following 709-residue polypeptide: PP2C-like domain-containing protein CG9801 (709 aa).

Disordered stretches follow at residues 121-222, 503-530, and 678-709; these read DCYG…NSER, LHPSTPPTRPARQSKAESPPNNAPSRPK, and GGGEEHNNGNENGDGGAISPVLQSKEFKETNF. A compositionally biased stretch (polar residues) spans 130–143; the sequence is PPVQVATQNSTRLT. A compositionally biased stretch (low complexity) spans 182-196; it reads ANLAAASAGTDAGKA. Residues 197–217 show a composition bias toward polar residues; the sequence is NSDQNNRNVLNAKTEVSTDGD. The PPM-type phosphatase domain maps to 259 to 503; sequence SVSLYETNML…KSASAIYARL (245 aa).

The sequence is that of PP2C-like domain-containing protein CG9801 from Drosophila melanogaster (Fruit fly).